The primary structure comprises 259 residues: MIRKTQAIVLRTINYGDQSKIVTFFTRSFGKLTGLVKGYRNPKGKFASVLEIGNDLDLVLYKKDTREVQLITEAVLRAPMLGATSSLEQLSALHQTLELIRLTTENDDAHLGVFELLHATLQKINVSRKNHISFFFYFQVQLISLLGFRLNFQKCVLTGKSLSEKALPKDARVVLLAEHGGFALQLAAEERGFAGMPVSTDAFKAVQWLSLVAIESVENLFLEKLVINEIFQLLDSYFRFHIDDLPAFRSREIFNQLVF.

This sequence belongs to the RecO family.

Its function is as follows. Involved in DNA repair and RecF pathway recombination. In Chloroherpeton thalassium (strain ATCC 35110 / GB-78), this protein is DNA repair protein RecO.